The chain runs to 229 residues: Orotidine 5'-phosphate decarboxylase (229 aa).

Residues D11, K33, 61 to 70 (DMKLFDISAT), T116, R179, Q188, G208, and R209 each bind substrate. The Proton donor role is filled by K63.

Belongs to the OMP decarboxylase family. Type 1 subfamily. As to quaternary structure, homodimer.

It catalyses the reaction orotidine 5'-phosphate + H(+) = UMP + CO2. It functions in the pathway pyrimidine metabolism; UMP biosynthesis via de novo pathway; UMP from orotate: step 2/2. Its function is as follows. Catalyzes the decarboxylation of orotidine 5'-monophosphate (OMP) to uridine 5'-monophosphate (UMP). The protein is Orotidine 5'-phosphate decarboxylase of Jannaschia sp. (strain CCS1).